Here is an 880-residue protein sequence, read N- to C-terminus: Alanine--tRNA ligase (880 aa).

Residues His567, His571, Cys669, and His673 each contribute to the Zn(2+) site.

Belongs to the class-II aminoacyl-tRNA synthetase family. Requires Zn(2+) as cofactor.

It localises to the cytoplasm. It catalyses the reaction tRNA(Ala) + L-alanine + ATP = L-alanyl-tRNA(Ala) + AMP + diphosphate. In terms of biological role, catalyzes the attachment of alanine to tRNA(Ala) in a two-step reaction: alanine is first activated by ATP to form Ala-AMP and then transferred to the acceptor end of tRNA(Ala). Also edits incorrectly charged Ser-tRNA(Ala) and Gly-tRNA(Ala) via its editing domain. This Bacillus cereus (strain ATCC 14579 / DSM 31 / CCUG 7414 / JCM 2152 / NBRC 15305 / NCIMB 9373 / NCTC 2599 / NRRL B-3711) protein is Alanine--tRNA ligase.